The chain runs to 150 residues: Arginine repressor (150 aa).

It belongs to the ArgR family.

The protein localises to the cytoplasm. It participates in amino-acid biosynthesis; L-arginine biosynthesis [regulation]. Functionally, regulates arginine biosynthesis genes. The protein is Arginine repressor of Staphylococcus aureus (strain Mu3 / ATCC 700698).